The following is a 95-amino-acid chain: Aspartyl/glutamyl-tRNA(Asn/Gln) amidotransferase subunit C (95 aa).

Belongs to the GatC family. In terms of assembly, heterotrimer of A, B and C subunits.

The catalysed reaction is L-glutamyl-tRNA(Gln) + L-glutamine + ATP + H2O = L-glutaminyl-tRNA(Gln) + L-glutamate + ADP + phosphate + H(+). It catalyses the reaction L-aspartyl-tRNA(Asn) + L-glutamine + ATP + H2O = L-asparaginyl-tRNA(Asn) + L-glutamate + ADP + phosphate + 2 H(+). Functionally, allows the formation of correctly charged Asn-tRNA(Asn) or Gln-tRNA(Gln) through the transamidation of misacylated Asp-tRNA(Asn) or Glu-tRNA(Gln) in organisms which lack either or both of asparaginyl-tRNA or glutaminyl-tRNA synthetases. The reaction takes place in the presence of glutamine and ATP through an activated phospho-Asp-tRNA(Asn) or phospho-Glu-tRNA(Gln). This chain is Aspartyl/glutamyl-tRNA(Asn/Gln) amidotransferase subunit C, found in Rhizorhabdus wittichii (strain DSM 6014 / CCUG 31198 / JCM 15750 / NBRC 105917 / EY 4224 / RW1) (Sphingomonas wittichii).